The following is a 381-amino-acid chain: Chitin deacetylase 8 (381 aa).

Positions M1–G18 are cleaved as a signal peptide. 2 disulfides stabilise this stretch: C27-C39 and C32-C37. Zn(2+) contacts are provided by D63, H117, and H121. 5 cysteine pairs are disulfide-bonded: C86–C335, C211–C216, C240–C246, C343–C365, and C348–C368. N171 carries an N-linked (GlcNAc...) asparagine glycan.

It belongs to the carbohydrate esterase 4 (CE4) family. It depends on Zn(2+) as a cofactor. Strongly expressed in the midgut. Has little or no expression in other tissues tested.

It is found in the secreted. The enzyme catalyses [(1-&gt;4)-N-acetyl-beta-D-glucosaminyl](n) + n H2O = chitosan + n acetate. Functionally, hydrolyzes the N-acetamido groups of N-acetyl-D-glucosamine (GlcNAc) residues in chitin. Shows activity towards the chitinous oligomers GlcNAc(3), GlcNAc(4), GlcNAc(5) and GlcNAc(6), but not GlcNAc or GlcNAc(2). Requires the substrate to occupy subsites 0, +1, and +2 for optimum catalysis. The chain is Chitin deacetylase 8 from Bombyx mori (Silk moth).